A 540-amino-acid polypeptide reads, in one-letter code: CTP synthase (540 aa).

The segment at 1–264 is amidoligase domain; it reads MQYIVVTGGV…ISYLSKLSGK (264 aa). Ser-12 lines the CTP pocket. Ser-12 serves as a coordination point for UTP. 13–18 contributes to the ATP binding site; it reads GLGKGT. Tyr-53 lines the L-glutamine pocket. Asp-70 contributes to the ATP binding site. The Mg(2+) site is built by Asp-70 and Glu-140. CTP is bound by residues 147-149, 185-190, and Arg-221; these read DIE and KTKPTQ. UTP contacts are provided by residues 185-190 and Arg-221; that span reads KTKPTQ. The 234-residue stretch at 294–527 folds into the Glutamine amidotransferase type-1 domain; it reads YVDLHDAYIS…VQQALIYKKN (234 aa). Residue Gly-347 coordinates L-glutamine. Cys-374 (nucleophile; for glutamine hydrolysis) is an active-site residue. L-glutamine is bound by residues 375–378, Glu-398, and Arg-455; that span reads LGFQ. Active-site residues include His-500 and Glu-502.

This sequence belongs to the CTP synthase family. As to quaternary structure, homotetramer.

It catalyses the reaction UTP + L-glutamine + ATP + H2O = CTP + L-glutamate + ADP + phosphate + 2 H(+). The catalysed reaction is L-glutamine + H2O = L-glutamate + NH4(+). The enzyme catalyses UTP + NH4(+) + ATP = CTP + ADP + phosphate + 2 H(+). The protein operates within pyrimidine metabolism; CTP biosynthesis via de novo pathway; CTP from UDP: step 2/2. With respect to regulation, allosterically activated by GTP, when glutamine is the substrate; GTP has no effect on the reaction when ammonia is the substrate. The allosteric effector GTP functions by stabilizing the protein conformation that binds the tetrahedral intermediate(s) formed during glutamine hydrolysis. Inhibited by the product CTP, via allosteric rather than competitive inhibition. In terms of biological role, catalyzes the ATP-dependent amination of UTP to CTP with either L-glutamine or ammonia as the source of nitrogen. Regulates intracellular CTP levels through interactions with the four ribonucleotide triphosphates. This chain is CTP synthase, found in Thermoplasma volcanium (strain ATCC 51530 / DSM 4299 / JCM 9571 / NBRC 15438 / GSS1).